The following is an 81-amino-acid chain: MATSKSGGSSKNGRDSISKRLGVKRSGGQFVRAGEIIVRQRGTKFHKGKNSGLGRDYTIFALKDGIVEFKTYRGRKYINII.

Polar residues predominate over residues 1-11 (MATSKSGGSSK). Residues 1 to 21 (MATSKSGGSSKNGRDSISKRL) are disordered.

Belongs to the bacterial ribosomal protein bL27 family.

This Borrelia hermsii (strain HS1 / DAH) protein is Large ribosomal subunit protein bL27.